Consider the following 670-residue polypeptide: Amyloid beta A4 precursor protein-binding family B member 1-interacting protein (670 aa).

Ser55 carries the post-translational modification Phosphoserine. In terms of domain architecture, Ras-associating spans 179–266; sequence KKLVVKVHMD…KVLFLEKEER (88 aa). Residues 313-422 form the PH domain; it reads VPELEGALYL…WVMGIRIAKY (110 aa). Residues 449-653 are disordered; the sequence is VGTPMPAQPS…PGAPGNSEQD (205 aa). Positions 456-475 are enriched in polar residues; the sequence is QPSTVSSGLKTGTSQPNGQM. A Phosphoserine modification is found at Ser532. Thr534 carries the phosphothreonine modification. Ser537 bears the Phosphoserine mark. Pro residues-rich tracts occupy residues 553–567, 576–599, 606–615, and 625–634; these read PHPP…PPPP, LPPP…PPPA, LPPPPPPPPC, and PLPPKKPLVP.

Belongs to the MRL family. As to quaternary structure, interacts, through the N-terminal Pro-rich region, with the WW domain of APBB1. Interacts with RAP1A, PFN1, VASP and ENAH. As to expression, ubiquitously expressed with high expression in the hematopoietic system.

The protein resides in the cell membrane. It is found in the cell projection. It localises to the lamellipodium. The protein localises to the cell junction. Its subcellular location is the focal adhesion. The protein resides in the cytoplasm. It is found in the cytoskeleton. Appears to function in the signal transduction from Ras activation to actin cytoskeletal remodeling. Suppresses insulin-induced promoter activities through AP1 and SRE. Mediates Rap1-induced adhesion. The protein is Amyloid beta A4 precursor protein-binding family B member 1-interacting protein (Apbb1ip) of Mus musculus (Mouse).